The primary structure comprises 305 residues: Probable lipid kinase YegS-like (305 aa).

One can recognise a DAGKc domain in the interval 1 to 129 (MTQRRAMLIL…VDLGEVGGKL (129 aa)). ATP contacts are provided by residues Thr39, 65 to 71 (GDGTLRD), and Thr92. Leu210, Asp213, and Leu215 together coordinate Mg(2+). The active-site Proton acceptor is the Glu268.

This sequence belongs to the diacylglycerol/lipid kinase family. YegS lipid kinase subfamily. Mg(2+) serves as cofactor. Requires Ca(2+) as cofactor.

It is found in the cytoplasm. Functionally, probably phosphorylates lipids; the in vivo substrate is unknown. This Pseudomonas syringae pv. syringae (strain B728a) protein is Probable lipid kinase YegS-like.